The chain runs to 394 residues: MWVPGAGIPSRLTLSAFTRAARFCVLNSGVARWKDVPAENCRGLYDFHTQLKPDVEFGKLSSRLYKSRSETKRYVTSPRVAETVVRVLRGKRKAGQLILECNPGPGVLTRALLESGARVIALESDKNFIPELKSLGNSVNGRLEVIYCDFFKLDPRNHGMVTPPVMTSDMLFQYLGVKAHPWKKGFPLKVVGILPAKTERNTLWKILHDLYSCSSVYKYGRAELNLFISEKECRKLTANPQTPALYQSLSVLGQTACGIKVLCTEPSSLFDTYAIKGELEKQRHRESLEQNLCFVQLTPHRNLFTGTLTPFNYDVFFHMLRQCFMKRNAKLIDHLPSLSPIDAVHILKQIKKKKDVRVVDMYPKDFLRLFETIECSKDDTCKWLYDEFMEDALS.

Residues 1 to 19 constitute a mitochondrion transit peptide; sequence MWVPGAGIPSRLTLSAFTR. Residues valine 75, glutamate 123, and aspartate 149 each contribute to the S-adenosyl-L-methionine site. Residues 326–327 are DNA-binding; it reads KR.

This sequence belongs to the class I-like SAM-binding methyltransferase superfamily. rRNA adenine N(6)-methyltransferase family. KsgA subfamily. Homodimer. Component of the mitochondrial transcription initiation complex, composed at least of TFB2M, TFAM and POLRMT. In this complex TFAM recruits POLRMT to the promoter whereas TFB2M induces structural changes in POLRMT to enable promoter opening and trapping of the DNA non-template strand. Interacts with mitochondrial RNA polymerase POLRMT. Interacts with TFAM.

The protein resides in the mitochondrion. The enzyme catalyses adenosine in rRNA + S-adenosyl-L-methionine = N(6)-methyladenosine in rRNA + S-adenosyl-L-homocysteine + H(+). S-adenosyl-L-methionine-dependent rRNA methyltransferase which may methylate two specific adjacent adenosines in the loop of a conserved hairpin near the 3'-end of 12S mitochondrial rRNA. Component of the mitochondrial transcription initiation complex, composed at least of TFB2M, TFAM and POLRMT that is required for basal transcription of mitochondrial DNA. In this complex TFAM recruits POLRMT to a specific promoter whereas TFB2M induces structural changes in POLRMT to enable promoter opening and trapping of the DNA non-template strand. Stimulates transcription independently of the methyltransferase activity. In Bos taurus (Bovine), this protein is Dimethyladenosine transferase 2, mitochondrial.